Here is a 548-residue protein sequence, read N- to C-terminus: Fumarate hydratase class I, aerobic (548 aa).

The [4Fe-4S] cluster site is built by C105, C224, and C318.

This sequence belongs to the class-I fumarase family. Homodimer. [4Fe-4S] cluster is required as a cofactor.

The enzyme catalyses (S)-malate = fumarate + H2O. It catalyses the reaction oxaloacetate = enol-oxaloacetate. It functions in the pathway carbohydrate metabolism; tricarboxylic acid cycle; (S)-malate from fumarate: step 1/1. Its function is as follows. Catalyzes the reversible hydration of fumarate to (S)-malate. Functions as an aerobic enzyme in the direction of malate formation as part of the citric acid cycle. Accounts for about 80% of the fumarase activity when the bacteria grow aerobically. To a lesser extent, also displays D-tartrate dehydratase activity in vitro, but is not able to convert (R)-malate, L-tartrate or meso-tartrate. Can also catalyze the isomerization of enol- to keto-oxaloacetate. This Escherichia coli O6:H1 (strain CFT073 / ATCC 700928 / UPEC) protein is Fumarate hydratase class I, aerobic.